A 357-amino-acid polypeptide reads, in one-letter code: Putative F-box/kelch-repeat protein At5g38680 (357 aa).

Residues 14–61 (NSNPSLPDALIISCIARVSRLYYPILSFVSKSFRSLLASPELYKERSL) form the F-box domain. Kelch repeat units follow at residues 131–175 (NIYN…VLDG), 177–224 (IYVA…SKSL), 226–267 (IDEK…YCEI), and 268–313 (ENVL…GGKK).

The sequence is that of Putative F-box/kelch-repeat protein At5g38680 from Arabidopsis thaliana (Mouse-ear cress).